Consider the following 144-residue polypeptide: ATP synthase epsilon chain (144 aa).

The protein belongs to the ATPase epsilon chain family. In terms of assembly, F-type ATPases have 2 components, CF(1) - the catalytic core - and CF(0) - the membrane proton channel. CF(1) has five subunits: alpha(3), beta(3), gamma(1), delta(1), epsilon(1). CF(0) has three main subunits: a, b and c.

The protein resides in the cell inner membrane. Functionally, produces ATP from ADP in the presence of a proton gradient across the membrane. The chain is ATP synthase epsilon chain from Hydrogenovibrio crunogenus (strain DSM 25203 / XCL-2) (Thiomicrospira crunogena).